Consider the following 346-residue polypeptide: Fe(3+) ions import ATP-binding protein FbpC 1 (346 aa).

In terms of domain architecture, ABC transporter spans 5–235; the sequence is LEVDGVDKSF…PIDVPTAEFI (231 aa). Residue 37–44 coordinates ATP; the sequence is GPSGCGKT.

It belongs to the ABC transporter superfamily. Fe(3+) ion importer (TC 3.A.1.10) family. In terms of assembly, the complex is composed of two ATP-binding proteins (FbpC), two transmembrane proteins (FbpB) and a solute-binding protein (FbpA).

It is found in the cell membrane. The catalysed reaction is Fe(3+)(out) + ATP + H2O = Fe(3+)(in) + ADP + phosphate + H(+). Part of the ABC transporter complex FbpABC involved in Fe(3+) ions import. Responsible for energy coupling to the transport system. This is Fe(3+) ions import ATP-binding protein FbpC 1 from Rhodococcus jostii (strain RHA1).